Here is a 220-residue protein sequence, read N- to C-terminus: Glutamine amidotransferase-like class 1 domain-containing protein 1 (220 aa).

A signal peptide spans 1–38; that stretch reads MASERLPNRPACLLVASGAAEGVSAQSFLHCFTMASTA. Asparagine 201 carries an N-linked (GlcNAc...) asparagine glycan.

It belongs to the peptidase C56 family. Homotetramer. Component of the FERRY complex composed of five subunits, TBCK, PPP1R21, FERRY3, CRYZL1 and GATD1 with a ratio of 1:2:1:2:4, respectively.

The protein localises to the secreted. It is found in the early endosome. In terms of biological role, component of the FERRY complex (Five-subunit Endosomal Rab5 and RNA/ribosome intermediary). The FERRY complex directly interacts with mRNAs and RAB5A, and functions as a RAB5A effector involved in the localization and the distribution of specific mRNAs most likely by mediating their endosomal transport. The complex recruits mRNAs and ribosomes to early endosomes through direct mRNA-interaction. This Homo sapiens (Human) protein is Glutamine amidotransferase-like class 1 domain-containing protein 1.